We begin with the raw amino-acid sequence, 84 residues long: Putative defensin-like protein 63 (84 aa).

Positions 1–21 are cleaved as a signal peptide; it reads MDIRKTYVIIFFVGILTISFS. 4 disulfides stabilise this stretch: C40-C81, C44-C67, C53-C79, and C57-C80.

Belongs to the DEFL family.

The protein resides in the secreted. The sequence is that of Putative defensin-like protein 63 from Arabidopsis thaliana (Mouse-ear cress).